The primary structure comprises 1098 residues: WD repeat-containing protein 72 (1098 aa).

8 WD repeats span residues 15–54, 60–102, 158–196, 315–359, 399–438, 456–501, 504–549, and 552–591; these read APPHSITAIMITDDQRMIVTGSQEGQLCLWNLSHELKISA, GHSA…CVEK, WINCMCIVHSMRIQDSLLVVSVAGELKVWDLSSSINSIQ, ENKN…VSKF, AGTAVVTSSEYIPSLDKLICGCEDGTIIITQALNAAKARL, GHHQ…ILHK, LEAG…CLLR, and KHLFPVKMIKWHPVENFLIVGCADDSVYIWEIETGTLERH. 2 positions are modified to phosphoserine: Ser1077 and Ser1079.

It is found in the cytoplasmic vesicle. In terms of biological role, plays a major role in formation of tooth enamel. Specifically required during the maturation phase of amelogenesis for normal formation of the enamel matrix and clearance of enamel proteins. May be involved in localization of the calcium transporter SLC24A4 to the ameloblast cell membrane. This chain is WD repeat-containing protein 72 (WDR72), found in Pongo abelii (Sumatran orangutan).